Here is a 280-residue protein sequence, read N- to C-terminus: Ribosomal protein L11 methyltransferase (280 aa).

Threonine 131, glycine 152, aspartate 174, and asparagine 217 together coordinate S-adenosyl-L-methionine.

This sequence belongs to the methyltransferase superfamily. PrmA family.

It is found in the cytoplasm. The catalysed reaction is L-lysyl-[protein] + 3 S-adenosyl-L-methionine = N(6),N(6),N(6)-trimethyl-L-lysyl-[protein] + 3 S-adenosyl-L-homocysteine + 3 H(+). Its function is as follows. Methylates ribosomal protein L11. This Bacteroides thetaiotaomicron (strain ATCC 29148 / DSM 2079 / JCM 5827 / CCUG 10774 / NCTC 10582 / VPI-5482 / E50) protein is Ribosomal protein L11 methyltransferase.